The primary structure comprises 272 residues: Glutamate racemase (272 aa).

Residues 16–17 and 48–49 contribute to the substrate site; these read DS and YG. Cys-79 serves as the catalytic Proton donor/acceptor. Substrate is bound at residue 80–81; that stretch reads NT. Catalysis depends on Cys-191, which acts as the Proton donor/acceptor. 192–193 provides a ligand contact to substrate; it reads TH.

Belongs to the aspartate/glutamate racemases family.

It catalyses the reaction L-glutamate = D-glutamate. It functions in the pathway cell wall biogenesis; peptidoglycan biosynthesis. In terms of biological role, provides the (R)-glutamate required for cell wall biosynthesis. The protein is Glutamate racemase of Chlorobaculum tepidum (strain ATCC 49652 / DSM 12025 / NBRC 103806 / TLS) (Chlorobium tepidum).